The primary structure comprises 284 residues: Bifunctional protein FolD (284 aa).

Residues 165–167 and S190 each bind NADP(+); that span reads GRS.

The protein belongs to the tetrahydrofolate dehydrogenase/cyclohydrolase family. In terms of assembly, homodimer.

The enzyme catalyses (6R)-5,10-methylene-5,6,7,8-tetrahydrofolate + NADP(+) = (6R)-5,10-methenyltetrahydrofolate + NADPH. It carries out the reaction (6R)-5,10-methenyltetrahydrofolate + H2O = (6R)-10-formyltetrahydrofolate + H(+). The protein operates within one-carbon metabolism; tetrahydrofolate interconversion. Its function is as follows. Catalyzes the oxidation of 5,10-methylenetetrahydrofolate to 5,10-methenyltetrahydrofolate and then the hydrolysis of 5,10-methenyltetrahydrofolate to 10-formyltetrahydrofolate. The sequence is that of Bifunctional protein FolD from Streptococcus equi subsp. zooepidemicus (strain H70).